Consider the following 245-residue polypeptide: MKLVLDTHTHTISSGHAYSTITENAREAYKKGLQLICMTDHGPKMPGAAHLWYFGNLKVLPEKIEGVEILKGVEVNIMDEEGNLDLPEGILKKLDIVIASLHDVCFEPSDDIERNTKAIINAIKNPYVDIIGHPGNPIYPIDIEKVLMAAKEYGKFIEINNSSFVSSRKGSEENCFLIAKKAKEMGVKIAVGSDAHVSFDVGRFEEALKVIKNAGITEDLVLNTDVGKIKEYLKEKKRKIGGEEE.

Zn(2+) contacts are provided by His8, His10, His16, His41, Glu74, His102, His133, Asp194, and His196.

This sequence belongs to the PHP family. The cofactor is Zn(2+).

The protein is Probable phosphatase Teth514_1060 of Thermoanaerobacter sp. (strain X514).